Reading from the N-terminus, the 146-residue chain is Angiogenin (146 aa).

The signal sequence occupies residues 1–24; sequence MVMGPHLLLLVFILGLGLTPPTLA. At Gln-25 the chain carries Pyrrolidone carboxylic acid. His-37 acts as the Proton acceptor in catalysis. Intrachain disulfides connect Cys-50–Cys-105, Cys-63–Cys-116, and Cys-81–Cys-131. Residues 55–59 carry the Nucleolar localization signal motif; it reads RLRNM. TRNA-binding residues include Cys-105 and Ile-127. His-138 functions as the Proton donor in the catalytic mechanism.

Belongs to the pancreatic ribonuclease family. As to quaternary structure, homodimer. Interacts with RNH1; inhibiting ANG ribonuclease activity. Interacts with PCNA.

The protein resides in the secreted. Its subcellular location is the nucleus. It localises to the nucleolus. The protein localises to the cytoplasm. It is found in the stress granule. Its activity is regulated as follows. Has weak tRNA ribonuclease activity by itself due to partial autoinhibition by its C-terminus, which folds into a short alpha-helix that partially occludes the substrate-binding site. In absence of stress, the ribonuclease activity is inhibited by RNH1 in the cytoplasm. In response to stress, dissociates from RNH1 in the cytoplasm and associates with cytoplasmic ribosomes with vacant A-sites: ribosomes directly activate the tRNA ribonuclease activity of ANG by refolding the C-terminal alpha-helix. In response to stress, the angiogenic activity of ANG is inhibited by RNH1 in the nucleus. Functionally, secreted ribonuclease that can either promote or restrict cell proliferation of target cells, depending on the context. Endocytosed in target cells via its receptor PLXNB2 and translocates to the cytoplasm or nucleus. Under stress conditions, localizes to the cytoplasm and promotes the assembly of stress granules (SGs): specifically cleaves a subset of tRNAs within anticodon loops to produce tRNA-derived stress-induced fragments (tiRNAs), resulting in translation repression and inhibition of cell proliferation. tiRNas also prevent formation of apoptosome, thereby promoting cell survival. Preferentially cleaves RNAs between a pyrimidine and an adenosine residue, suggesting that it cleaves the anticodon loop of tRNA(Ala) (32-UUAGCAU-38) after positions 33 and 36. Cleaves a subset of tRNAs, including tRNA(Ala), tRNA(Glu), tRNA(Gly), tRNA(Lys), tRNA(Val), tRNA(His), tRNA(Asp) and tRNA(Sec). Under growth conditions and in differentiated cells, translocates to the nucleus and stimulates ribosomal RNA (rRNA) transcription, including that containing the initiation site sequences of 45S rRNA, thereby promoting cell growth and proliferation. Angiogenin induces vascularization of normal and malignant tissues via its ability to promote rRNA transcription. Involved in hematopoietic stem and progenitor cell (HSPC) growth and survival by promoting rRNA transcription in growth conditions and inhibiting translation in response to stress, respectively. Mediates the crosstalk between myeloid and intestinal epithelial cells to protect the intestinal epithelial barrier integrity: secreted by myeloid cells and promotes intestinal epithelial cells proliferation and survival. Also mediates osteoclast-endothelial cell crosstalk in growing bone: produced by osteoclasts and protects the neighboring vascular cells against senescence by promoting rRNA transcription. The polypeptide is Angiogenin (ANG) (Saimiri sciureus (Common squirrel monkey)).